We begin with the raw amino-acid sequence, 171 residues long: Tetratricopeptide repeat protein 9C (171 aa).

TPR repeat units follow at residues 8–41, 72–107, and 108–141; these read AQLYKEEGNQRYREGKYRDAVSRYHRALLQLRGL, TDCYNNLAACLLQMEPVNYERVREYSQKVLERQPDN, and AKALYRAGVAFFHLQDYDQARHYLLAAVNRQPKD.

It belongs to the TTC9 family.

The sequence is that of Tetratricopeptide repeat protein 9C (TTC9C) from Homo sapiens (Human).